The sequence spans 35 residues: Cytochrome b6-f complex subunit 7 (35 aa).

Residues A9 to L27 traverse the membrane as a helical segment.

Belongs to the PetM family. The 4 large subunits of the cytochrome b6-f complex are cytochrome b6, subunit IV (17 kDa polypeptide, PetD), cytochrome f and the Rieske protein, while the 4 small subunits are PetG, PetL, PetM and PetN. The complex functions as a dimer.

Its subcellular location is the cellular thylakoid membrane. Functionally, component of the cytochrome b6-f complex, which mediates electron transfer between photosystem II (PSII) and photosystem I (PSI), cyclic electron flow around PSI, and state transitions. The sequence is that of Cytochrome b6-f complex subunit 7 from Synechococcus sp. (strain JA-3-3Ab) (Cyanobacteria bacterium Yellowstone A-Prime).